We begin with the raw amino-acid sequence, 122 residues long: Large ribosomal subunit protein uL14 (122 aa).

The protein belongs to the universal ribosomal protein uL14 family. As to quaternary structure, part of the 50S ribosomal subunit. Forms a cluster with proteins L3 and L19. In the 70S ribosome, L14 and L19 interact and together make contacts with the 16S rRNA in bridges B5 and B8.

Binds to 23S rRNA. Forms part of two intersubunit bridges in the 70S ribosome. In Brevibacillus brevis (strain 47 / JCM 6285 / NBRC 100599), this protein is Large ribosomal subunit protein uL14.